A 408-amino-acid polypeptide reads, in one-letter code: Histone acetyltransferase type B subunit 2 (408 aa).

WD repeat units follow at residues 120–160 (KHEQ…KDHG), 167–207 (YHKE…NKSP), 213–253 (VHTD…AIQK), 255–295 (SVSS…KPLH), and 299–339 (GHED…AEQQ). The interaction with the histone H4 N-terminus stretch occupies residues 341-345 (DDAYD). Residues 356–396 (GHRSPVNEFSHNSNVPWLMCSVEEENVLQIWKPANKIVRPP) form a WD 6 repeat.

It belongs to the WD repeat RBAP46/RBAP48/MSI1 family. Component of the HAT-B complex composed of at least HAT1 and HAT2. The HAT-B complex binds to histone H4 tail.

It localises to the cytoplasm. The protein resides in the nucleus. Its function is as follows. Regulatory subunit of the histone acetylase B (HAT-B) complex. The complex acetylates 'Lys-12' of histone H4 which is required for telomeric silencing. The protein is Histone acetyltransferase type B subunit 2 (HAT2) of Kluyveromyces lactis (strain ATCC 8585 / CBS 2359 / DSM 70799 / NBRC 1267 / NRRL Y-1140 / WM37) (Yeast).